Reading from the N-terminus, the 314-residue chain is tRNA dimethylallyltransferase (314 aa).

14–21 (GPTASGKT) contacts ATP. 16–21 (TASGKT) is a substrate binding site. Interaction with substrate tRNA regions lie at residues 39–42 (DSAQ), 163–167 (QRLQR), and 245–250 (RCVGYR).

The protein belongs to the IPP transferase family. Monomer. Mg(2+) serves as cofactor.

It carries out the reaction adenosine(37) in tRNA + dimethylallyl diphosphate = N(6)-dimethylallyladenosine(37) in tRNA + diphosphate. Functionally, catalyzes the transfer of a dimethylallyl group onto the adenine at position 37 in tRNAs that read codons beginning with uridine, leading to the formation of N6-(dimethylallyl)adenosine (i(6)A). The chain is tRNA dimethylallyltransferase from Dechloromonas aromatica (strain RCB).